Reading from the N-terminus, the 429-residue chain is Glutamate-1-semialdehyde 2,1-aminomutase 2 (429 aa).

K268 bears the N6-(pyridoxal phosphate)lysine mark.

Belongs to the class-III pyridoxal-phosphate-dependent aminotransferase family. HemL subfamily. In terms of assembly, homodimer. Pyridoxal 5'-phosphate serves as cofactor.

It localises to the cytoplasm. The catalysed reaction is (S)-4-amino-5-oxopentanoate = 5-aminolevulinate. It participates in porphyrin-containing compound metabolism; protoporphyrin-IX biosynthesis; 5-aminolevulinate from L-glutamyl-tRNA(Glu): step 2/2. The protein is Glutamate-1-semialdehyde 2,1-aminomutase 2 of Bacillus cereus (strain B4264).